The chain runs to 214 residues: Variable small protein 1 (214 aa).

The N-terminal stretch at 1 to 18 is a signal peptide; the sequence is MRKRISAIIMTLFMVFMS. Cys-19 carries N-palmitoyl cysteine lipidation. The S-diacylglycerol cysteine moiety is linked to residue Cys-19.

This sequence belongs to the variable small protein (Vsp) family.

The protein localises to the cell outer membrane. In terms of biological role, the Vlp and Vsp proteins are antigenically distinct proteins, only one vlp or vsp gene is transcriptionally active at any one time. Switching between these genes is a mechanism of host immune response evasion. The sequence is that of Variable small protein 1 from Borrelia hermsii.